The chain runs to 744 residues: NAD(P)H-quinone oxidoreductase subunit 5, chloroplastic (744 aa).

16 helical membrane passes run 9–29 (WIIPFLPLPVPMLIGLGLFLF), 40–60 (WAFQSVLLLSIVMIFSMNLSI), 89–109 (IDPLTSIMSILITTVGILVLI), 125–145 (FVYMSFFSTSMLGLVTSSNLI), 147–167 (IYIFWELVGICSYLLIGFWFT), 185–205 (GDFGLLLGILGFYWITGSFEF), 219–239 (NEVNFLFVTLCAVLLFAGAIA), 258–278 (TPISALIHAATMVAAGIFLVA), 290–312 (IMNFISLIGIITVFLGATLALAQ), 327–347 (LGYMMLALGMGSYRSALFHLI), 354–374 (ALLFLGSGSVIHSMETLVGYC), 396–416 (TSFLLGTLSLCGIPPLACFWS), 425–445 (WLYSPIFAIIAWSTAGLTAFY), 549–569 (LFPILILVLFTLFVGFLGIPF), 608–628 (VFSVSISSFGIFIAFFLYKPV), and 724–744 (YLFFYFSYVSIFLLIYYFLNF).

Belongs to the complex I subunit 5 family. In terms of assembly, NDH is composed of at least 16 different subunits, 5 of which are encoded in the nucleus.

The protein localises to the plastid. It is found in the chloroplast thylakoid membrane. The enzyme catalyses a plastoquinone + NADH + (n+1) H(+)(in) = a plastoquinol + NAD(+) + n H(+)(out). It carries out the reaction a plastoquinone + NADPH + (n+1) H(+)(in) = a plastoquinol + NADP(+) + n H(+)(out). Functionally, NDH shuttles electrons from NAD(P)H:plastoquinone, via FMN and iron-sulfur (Fe-S) centers, to quinones in the photosynthetic chain and possibly in a chloroplast respiratory chain. The immediate electron acceptor for the enzyme in this species is believed to be plastoquinone. Couples the redox reaction to proton translocation, and thus conserves the redox energy in a proton gradient. This is NAD(P)H-quinone oxidoreductase subunit 5, chloroplastic (ndhF) from Mutisia acuminata.